The chain runs to 97 residues: Secreted LysM effector Mg1LysM (97 aa).

The N-terminal stretch at 1-18 (MQFTALVAALLSVAAVQA) is a signal peptide. The LysM domain occupies 37–84 (QQYVARSGDTLTKIAQEIYHDVVGVCDIARANNLADPNRIDAGTPYTI). Residues Gly44, Thr48, Asn74, and Ile76 each coordinate chitin.

Belongs to the secreted LysM effector family. In terms of assembly, forms homodimers in a chitin-independent manner through interactions at the N-termini of Mg1LysM monomers. Homodimers are further polymerized in a chitin-dependent manner.

The protein resides in the secreted. Its subcellular location is the cell wall. Secreted effector that enables the plant pathogenic fungus to manipulate host defenses for successful infection. Binds chitin but not cellulose or xylan. Chitin-induced polymerization of homodimers forms a contiguous Mg1LysM highly oligomeric super-complexe that is anchored to the chitin in the fungal cell wall to prevent hydrolysis by host chitinases. The protein is Secreted LysM effector Mg1LysM of Zymoseptoria tritici (strain ST99CH_3D7).